We begin with the raw amino-acid sequence, 121 residues long: Mitochondrial intermembrane space cysteine motif-containing protein MIX14 (121 aa).

CHCH domains follow at residues 14–56 (VANC…VPSV) and 60–105 (MSEC…VKNK). 4 consecutive short sequence motifs (cx9C motif) follow at residues 17 to 27 (CPQEFLQYHKC), 38 to 48 (CKDGRMILSTC), 63 to 73 (CSEPMKKYDQC), and 87 to 97 (CLGFLQDLRKC). Intrachain disulfides connect C17/C48, C27/C38, C63/C97, and C73/C87.

The protein resides in the mitochondrion intermembrane space. In Saccharomyces cerevisiae (strain ATCC 204508 / S288c) (Baker's yeast), this protein is Mitochondrial intermembrane space cysteine motif-containing protein MIX14 (MIX14).